The following is a 171-amino-acid chain: 3-hydroxydecanoyl-[acyl-carrier-protein] dehydratase (171 aa).

His70 is an active-site residue.

This sequence belongs to the thioester dehydratase family. FabA subfamily. As to quaternary structure, homodimer.

The protein localises to the cytoplasm. The enzyme catalyses a (3R)-hydroxyacyl-[ACP] = a (2E)-enoyl-[ACP] + H2O. It catalyses the reaction (3R)-hydroxydecanoyl-[ACP] = (2E)-decenoyl-[ACP] + H2O. It carries out the reaction (2E)-decenoyl-[ACP] = (3Z)-decenoyl-[ACP]. It functions in the pathway lipid metabolism; fatty acid biosynthesis. Necessary for the introduction of cis unsaturation into fatty acids. Catalyzes the dehydration of (3R)-3-hydroxydecanoyl-ACP to E-(2)-decenoyl-ACP and then its isomerization to Z-(3)-decenoyl-ACP. Can catalyze the dehydratase reaction for beta-hydroxyacyl-ACPs with saturated chain lengths up to 16:0, being most active on intermediate chain length. This chain is 3-hydroxydecanoyl-[acyl-carrier-protein] dehydratase, found in Methylococcus capsulatus (strain ATCC 33009 / NCIMB 11132 / Bath).